Reading from the N-terminus, the 554-residue chain is CTP synthase (554 aa).

The interval 1–265 is amidoligase domain; it reads MTPLIFVTGG…DEIVIDQFKL (265 aa). CTP is bound at residue serine 13. A UTP-binding site is contributed by serine 13. Residues 14–19 and aspartate 71 contribute to the ATP site; that span reads SLGKGI. Aspartate 71 and glutamate 139 together coordinate Mg(2+). CTP is bound by residues 146–148, 186–191, and lysine 222; these read DIE and KTKPTQ. Residues 186–191 and lysine 222 each bind UTP; that span reads KTKPTQ. The region spanning 292 to 545 is the Glutamine amidotransferase type-1 domain; the sequence is TIAVVGKYVD…VKASRARKAG (254 aa). Residue glycine 353 coordinates L-glutamine. Residue cysteine 380 is the Nucleophile; for glutamine hydrolysis of the active site. Residues 381-384, glutamate 404, and arginine 471 contribute to the L-glutamine site; that span reads YGMQ. Active-site residues include histidine 518 and glutamate 520.

This sequence belongs to the CTP synthase family. Homotetramer.

It catalyses the reaction UTP + L-glutamine + ATP + H2O = CTP + L-glutamate + ADP + phosphate + 2 H(+). The catalysed reaction is L-glutamine + H2O = L-glutamate + NH4(+). It carries out the reaction UTP + NH4(+) + ATP = CTP + ADP + phosphate + 2 H(+). It functions in the pathway pyrimidine metabolism; CTP biosynthesis via de novo pathway; CTP from UDP: step 2/2. With respect to regulation, allosterically activated by GTP, when glutamine is the substrate; GTP has no effect on the reaction when ammonia is the substrate. The allosteric effector GTP functions by stabilizing the protein conformation that binds the tetrahedral intermediate(s) formed during glutamine hydrolysis. Inhibited by the product CTP, via allosteric rather than competitive inhibition. Catalyzes the ATP-dependent amination of UTP to CTP with either L-glutamine or ammonia as the source of nitrogen. Regulates intracellular CTP levels through interactions with the four ribonucleotide triphosphates. The polypeptide is CTP synthase (Xylella fastidiosa (strain M23)).